Here is a 356-residue protein sequence, read N- to C-terminus: GDP-mannose 4,6 dehydratase (356 aa).

Residues 12–17 (GITGQD), 69–70 (DL), 91–95 (LGAQS), and Tyr106 contribute to the NADP(+) site. Residue Thr138 is part of the active site. Active-site nucleophile residues include Glu140 and Tyr162. NADP(+) is bound by residues Lys166, His192, and Arg197.

Belongs to the NAD(P)-dependent epimerase/dehydratase family. GDP-mannose 4,6-dehydratase subfamily. NADP(+) serves as cofactor.

It catalyses the reaction GDP-alpha-D-mannose = GDP-4-dehydro-alpha-D-rhamnose + H2O. It participates in nucleotide-sugar biosynthesis; GDP-L-fucose biosynthesis via de novo pathway; GDP-L-fucose from GDP-alpha-D-mannose: step 1/2. In terms of biological role, participates in the synthesis of GDP-L-fucose, catalyzing the conversion of GDP-D-mannose to GDP-4-dehydro-6-deoxy-D-mannose (GDP-4-dehydro-alpha-D-rhamnose) which is further catalyzed by GDP-L-fucose synthase (ger). GDP-L-fucose is important for the synthesis of fucosylated N-glycans which are expressed on the cell surface. The sequence is that of GDP-mannose 4,6 dehydratase (gmd) from Dictyostelium discoideum (Social amoeba).